Reading from the N-terminus, the 242-residue chain is DNA repair protein RecO (242 aa).

It belongs to the RecO family.

Involved in DNA repair and RecF pathway recombination. The polypeptide is DNA repair protein RecO (Dechloromonas aromatica (strain RCB)).